A 468-amino-acid polypeptide reads, in one-letter code: UDP-N-acetylmuramate--L-alanine ligase (468 aa).

An ATP-binding site is contributed by 118 to 124 (GTHGKTT).

The protein belongs to the MurCDEF family.

It is found in the cytoplasm. The catalysed reaction is UDP-N-acetyl-alpha-D-muramate + L-alanine + ATP = UDP-N-acetyl-alpha-D-muramoyl-L-alanine + ADP + phosphate + H(+). The protein operates within cell wall biogenesis; peptidoglycan biosynthesis. Its function is as follows. Cell wall formation. This is UDP-N-acetylmuramate--L-alanine ligase from Roseobacter denitrificans (strain ATCC 33942 / OCh 114) (Erythrobacter sp. (strain OCh 114)).